The primary structure comprises 574 residues: Proline--tRNA ligase (574 aa).

It belongs to the class-II aminoacyl-tRNA synthetase family. ProS type 1 subfamily. As to quaternary structure, homodimer.

It is found in the cytoplasm. The enzyme catalyses tRNA(Pro) + L-proline + ATP = L-prolyl-tRNA(Pro) + AMP + diphosphate. In terms of biological role, catalyzes the attachment of proline to tRNA(Pro) in a two-step reaction: proline is first activated by ATP to form Pro-AMP and then transferred to the acceptor end of tRNA(Pro). As ProRS can inadvertently accommodate and process non-cognate amino acids such as alanine and cysteine, to avoid such errors it has two additional distinct editing activities against alanine. One activity is designated as 'pretransfer' editing and involves the tRNA(Pro)-independent hydrolysis of activated Ala-AMP. The other activity is designated 'posttransfer' editing and involves deacylation of mischarged Ala-tRNA(Pro). The misacylated Cys-tRNA(Pro) is not edited by ProRS. This Nitratidesulfovibrio vulgaris (strain DP4) (Desulfovibrio vulgaris) protein is Proline--tRNA ligase.